Reading from the N-terminus, the 241-residue chain is UDP-2,3-diacylglucosamine hydrolase (241 aa).

Mn(2+) is bound by residues aspartate 8, histidine 10, aspartate 41, asparagine 79, and histidine 114. Asparagine 79–arginine 80 provides a ligand contact to substrate. Residues aspartate 122, lysine 164, lysine 167, and histidine 195 each contribute to the substrate site. 2 residues coordinate Mn(2+): histidine 195 and histidine 197.

Belongs to the LpxH family. It depends on Mn(2+) as a cofactor.

It localises to the cell inner membrane. The catalysed reaction is UDP-2-N,3-O-bis[(3R)-3-hydroxytetradecanoyl]-alpha-D-glucosamine + H2O = 2-N,3-O-bis[(3R)-3-hydroxytetradecanoyl]-alpha-D-glucosaminyl 1-phosphate + UMP + 2 H(+). The protein operates within glycolipid biosynthesis; lipid IV(A) biosynthesis; lipid IV(A) from (3R)-3-hydroxytetradecanoyl-[acyl-carrier-protein] and UDP-N-acetyl-alpha-D-glucosamine: step 4/6. Its function is as follows. Hydrolyzes the pyrophosphate bond of UDP-2,3-diacylglucosamine to yield 2,3-diacylglucosamine 1-phosphate (lipid X) and UMP by catalyzing the attack of water at the alpha-P atom. Involved in the biosynthesis of lipid A, a phosphorylated glycolipid that anchors the lipopolysaccharide to the outer membrane of the cell. This Aliivibrio fischeri (strain MJ11) (Vibrio fischeri) protein is UDP-2,3-diacylglucosamine hydrolase.